Consider the following 86-residue polypeptide: Small ribosomal subunit protein bS16 (86 aa).

This sequence belongs to the bacterial ribosomal protein bS16 family.

The sequence is that of Small ribosomal subunit protein bS16 from Thermoanaerobacter sp. (strain X514).